The primary structure comprises 290 residues: 4-hydroxy-tetrahydrodipicolinate synthase (290 aa).

A pyruvate-binding site is contributed by T48. The active-site Proton donor/acceptor is Y137. K165 acts as the Schiff-base intermediate with substrate in catalysis. I206 is a pyruvate binding site.

The protein belongs to the DapA family. Homotetramer; dimer of dimers.

It is found in the cytoplasm. The enzyme catalyses L-aspartate 4-semialdehyde + pyruvate = (2S,4S)-4-hydroxy-2,3,4,5-tetrahydrodipicolinate + H2O + H(+). It functions in the pathway amino-acid biosynthesis; L-lysine biosynthesis via DAP pathway; (S)-tetrahydrodipicolinate from L-aspartate: step 3/4. In terms of biological role, catalyzes the condensation of (S)-aspartate-beta-semialdehyde [(S)-ASA] and pyruvate to 4-hydroxy-tetrahydrodipicolinate (HTPA). The chain is 4-hydroxy-tetrahydrodipicolinate synthase from Ligilactobacillus salivarius (strain UCC118) (Lactobacillus salivarius).